The following is an 80-amino-acid chain: UPF0291 protein LACR_1198 (80 aa).

This sequence belongs to the UPF0291 family.

The protein localises to the cytoplasm. This Lactococcus lactis subsp. cremoris (strain SK11) protein is UPF0291 protein LACR_1198.